We begin with the raw amino-acid sequence, 152 residues long: AIG2-like protein D (152 aa).

Position 13–18 (13–18 (YGSLMA)) interacts with substrate. E81 acts as the Proton acceptor in catalysis.

It belongs to the gamma-glutamylcyclotransferase family. In terms of tissue distribution, expressed mainly in leaves.

In terms of biological role, putative gamma-glutamylcyclotransferase. This Arabidopsis thaliana (Mouse-ear cress) protein is AIG2-like protein D.